The primary structure comprises 99 residues: UPF0122 protein UU142 (99 aa).

Belongs to the UPF0122 family.

Its function is as follows. Might take part in the signal recognition particle (SRP) pathway. This is inferred from the conservation of its genetic proximity to ftsY/ffh. May be a regulatory protein. This Ureaplasma parvum serovar 3 (strain ATCC 700970) protein is UPF0122 protein UU142.